Consider the following 329-residue polypeptide: 4-hydroxythreonine-4-phosphate dehydrogenase (329 aa).

The substrate site is built by His-136 and Thr-137. 3 residues coordinate a divalent metal cation: His-166, His-211, and His-266. Lys-274, Asn-283, and Arg-292 together coordinate substrate.

Belongs to the PdxA family. Homodimer. It depends on Zn(2+) as a cofactor. Mg(2+) serves as cofactor. The cofactor is Co(2+).

The protein localises to the cytoplasm. It catalyses the reaction 4-(phosphooxy)-L-threonine + NAD(+) = 3-amino-2-oxopropyl phosphate + CO2 + NADH. Its pathway is cofactor biosynthesis; pyridoxine 5'-phosphate biosynthesis; pyridoxine 5'-phosphate from D-erythrose 4-phosphate: step 4/5. Functionally, catalyzes the NAD(P)-dependent oxidation of 4-(phosphooxy)-L-threonine (HTP) into 2-amino-3-oxo-4-(phosphooxy)butyric acid which spontaneously decarboxylates to form 3-amino-2-oxopropyl phosphate (AHAP). In Shigella flexneri serotype 5b (strain 8401), this protein is 4-hydroxythreonine-4-phosphate dehydrogenase.